The following is a 786-amino-acid chain: Elastin (786 aa).

Residues 1 to 26 (MAGLTAAAPRPGVLLLLLSILHPSRP) form the signal peptide. The residue at position 34 (Pro-34) is a Hydroxyproline. Residues Pro-65, Pro-67, and Pro-88 each carry the hydroxyproline; partial modification. An allysine mark is found at Lys-104 and Lys-107. Pro-116 is modified (4-hydroxyproline; partial). Pro-156, Pro-167, Pro-170, and Pro-177 each carry hydroxyproline; partial. Pro-190 is subject to 4-hydroxyproline; partial. Lys-241, Lys-261, and Lys-265 each carry allysine. Pro-283 and Pro-286 each carry 4-hydroxyproline; partial. Residue Pro-290 is modified to Hydroxyproline; partial. Residues Lys-312 and Lys-315 each carry the allysine modification. A 4-hydroxyproline; partial mark is found at Pro-327, Pro-342, and Pro-347. Pro-352 and Pro-355 each carry hydroxyproline; partial. A 4-hydroxyproline; partial modification is found at Pro-360. 3 positions are modified to allysine: Lys-375, Lys-379, and Lys-382. At Pro-415 the chain carries 4-hydroxyproline; partial. Pro-421 carries the post-translational modification Hydroxyproline; partial. Pro-427 bears the 4-hydroxyproline; partial mark. Allysine is present on residues Lys-448 and Lys-451. A Hydroxyproline; partial modification is found at Pro-465. 4-hydroxyproline; partial is present on Pro-481. 2 positions are modified to allysine: Lys-492 and Lys-496. Hydroxyproline; partial occurs at positions 522 and 550. Allysine occurs at positions 558, 562, and 566. Residue Pro-580 is modified to 4-hydroxyproline; partial. 4-hydroxyproline is present on residues Pro-589 and Pro-598. Position 607 is a 4-hydroxyproline; partial (Pro-607). Residues 615-645 (EGVRRSLSPELREGDPSSSQHLPSTPSSPRV) are disordered. Low complexity predominate over residues 630 to 645 (PSSSQHLPSTPSSPRV). At Pro-646 the chain carries Hydroxyproline; partial. 2 positions are modified to allysine: Lys-653 and Lys-656. Pro-677 bears the 4-hydroxyproline; partial mark. 4 positions are modified to allysine: Lys-693, Lys-697, Lys-735, and Lys-738. Pro-769 and Pro-772 each carry hydroxyproline; partial. Residues Cys-776 and Cys-781 are joined by a disulfide bond.

The protein belongs to the elastin family. As to quaternary structure, the polymeric elastin chains are cross-linked together into an extensible 3D network. Forms a ternary complex with BGN and MFAP2. Interacts with MFAP2 via divalent cations (calcium &gt; magnesium &gt; manganese) in a dose-dependent and saturating manner. Interacts with FBLN5. Interacts with FBN1. Forms a ternary complex with FBN1 and FBLN2 or FBLN5. Interacts with MFAP4 in a Ca (2+)-dependent manner; this interaction promotes ELN self-assembly. Interacts with EFEMP2 with moderate affinity. In terms of processing, elastin is formed through the cross-linking of its soluble precursor tropoelastin. Cross-linking is initiated through the action of lysyl oxidase on exposed lysines to form allysine. Subsequent spontaneous condensation reactions with other allysine or unmodified lysine residues result in various bi-, tri-, and tetrafunctional cross-links. The most abundant cross-links in mature elastin fibers are lysinonorleucine, allysine aldol, desmosine, and isodesmosine. Post-translationally, hydroxylation on proline residues within the sequence motif, GXPG, is most likely 4-hydroxy as this fits the requirement for 4-hydroxylation in vertebrates. Expressed within the outer myometrial smooth muscle and throughout the arteriolar tree of uterus (at protein level). Also expressed in the large arteries, lung and skin.

The protein resides in the secreted. Its subcellular location is the extracellular space. It localises to the extracellular matrix. Its function is as follows. Major structural protein of tissues such as aorta and nuchal ligament, which must expand rapidly and recover completely. Molecular determinant of the late arterial morphogenesis, stabilizing arterial structure by regulating proliferation and organization of vascular smooth muscle. This is Elastin (ELN) from Homo sapiens (Human).